The primary structure comprises 99 residues: UPF0213 protein YazA (99 aa).

A GIY-YIG domain is found at 4–79; it reads NNHFFYVVKC…KKLTRKKKEL (76 aa).

The protein belongs to the UPF0213 family.

The protein is UPF0213 protein YazA (yazA) of Bacillus subtilis (strain 168).